A 539-amino-acid chain; its full sequence is Chaperonin GroEL (539 aa).

ATP is bound by residues 30–33 (TLGP), lysine 51, 87–91 (DGTTT), glycine 415, 479–481 (NAA), and aspartate 495.

Belongs to the chaperonin (HSP60) family. In terms of assembly, forms a cylinder of 14 subunits composed of two heptameric rings stacked back-to-back. Interacts with the co-chaperonin GroES.

It is found in the cytoplasm. It carries out the reaction ATP + H2O + a folded polypeptide = ADP + phosphate + an unfolded polypeptide.. Its function is as follows. Together with its co-chaperonin GroES, plays an essential role in assisting protein folding. The GroEL-GroES system forms a nano-cage that allows encapsulation of the non-native substrate proteins and provides a physical environment optimized to promote and accelerate protein folding. This chain is Chaperonin GroEL, found in Enterobacter agglomerans (Erwinia herbicola).